A 253-amino-acid chain; its full sequence is uncharacterized protein (253 aa).

Residues Ile17, Ser36, Asp62, Asn89, Tyr158, Lys162, Val191, and Thr193 each contribute to the NADP(+) site. Tyr158 serves as the catalytic Proton donor. Catalysis depends on Lys162, which acts as the Lowers pKa of active site Tyr.

It belongs to the short-chain dehydrogenases/reductases (SDR) family.

The protein resides in the cytoplasm. Its subcellular location is the nucleus. This is an uncharacterized protein from Schizosaccharomyces pombe (strain 972 / ATCC 24843) (Fission yeast).